Consider the following 525-residue polypeptide: uncharacterized protein (525 aa).

The N-terminal stretch at 1–21 is a signal peptide; that stretch reads MLECLSALLVLFAGGGGSVLA. The Extracellular segment spans residues 22–448; that stretch reads AVQSKTVADP…ISAASQLDKR (427 aa). The interval 242–264 is disordered; the sequence is KVSSENCSKDTDDKSGSKKERNT. Residues 449-469 traverse the membrane as a helical segment; sequence IFIFTAITVSITTLMMLGFSY. Residues 470-525 are Cytoplasmic-facing; sequence RSRVSFRDHSIDDSDDDNDWSDDEVEFDEEYFYSLPVSIPEKGISLDKMAQQLGVE.

Its subcellular location is the membrane. This is an uncharacterized protein from Saccharomyces cerevisiae (strain ATCC 204508 / S288c) (Baker's yeast).